The following is a 455-amino-acid chain: Chromosomal replication initiator protein DnaA (455 aa).

Positions 1–75 (MDTNNNIEKE…EILSQNKVGM (75 aa)) are domain I, interacts with DnaA modulators. The interval 75-106 (MHLAHSVDVRIEVAPKIQINAQANINYKAIKT) is domain II. A domain III, AAA+ region region spans residues 107–321 (SVKDSYTFEN…GAIIKISVNA (215 aa)). ATP-binding residues include Gly-151, Gly-153, Lys-154, and Thr-155. Residues 322-455 (NLMNAPIDLN…DKKTAFNSSE (134 aa)) form a domain IV, binds dsDNA region.

The protein belongs to the DnaA family. In terms of assembly, oligomerizes as a right-handed, spiral filament on DNA at oriC.

Its subcellular location is the cytoplasm. In terms of biological role, plays an essential role in the initiation and regulation of chromosomal replication. ATP-DnaA binds to the origin of replication (oriC) to initiate formation of the DNA replication initiation complex once per cell cycle. Binds the DnaA box (a 9 base pair repeat at the origin) and separates the double-stranded (ds)DNA. Forms a right-handed helical filament on oriC DNA; dsDNA binds to the exterior of the filament while single-stranded (ss)DNA is stabiized in the filament's interior. The ATP-DnaA-oriC complex binds and stabilizes one strand of the AT-rich DNA unwinding element (DUE), permitting loading of DNA polymerase. After initiation quickly degrades to an ADP-DnaA complex that is not apt for DNA replication. Binds acidic phospholipids. In Helicobacter pylori (strain G27), this protein is Chromosomal replication initiator protein DnaA.